The following is a 520-amino-acid chain: Ubiquitin carboxyl-terminal hydrolase 3 (520 aa).

Met1 carries the post-translational modification N-acetylmethionine. The UBP-type zinc finger occupies 1–121; it reads MECPHLSSSV…QKVREHLQNL (121 aa). Zn(2+)-binding residues include Cys3, His5, Cys29, Cys32, Cys41, Cys44, Cys49, His56, His60, His82, Cys95, and Cys98. The 353-residue stretch at 159–511 folds into the USP domain; that stretch reads TGLRNLGNTC…KAYILFYVER (353 aa). The active-site Nucleophile is Cys168. Residue His471 is the Proton acceptor of the active site.

The protein belongs to the peptidase C19 family. USP3 subfamily. As to quaternary structure, interacts (via UBP-type domain) with H2A; the interaction is less efficient than with monoubiquitinated H2A.

It is found in the nucleus. Its subcellular location is the cytoplasm. The enzyme catalyses Thiol-dependent hydrolysis of ester, thioester, amide, peptide and isopeptide bonds formed by the C-terminal Gly of ubiquitin (a 76-residue protein attached to proteins as an intracellular targeting signal).. Deubiquitinase that plays a role in several cellular processes including transcriptional regulation, cell cycle progression or innate immunity. In response to DNA damage, deubiquitinates monoubiquitinated target proteins such as histone H2A and H2AX and thereby counteracts RNF168- and RNF8-mediated ubiquitination. In turn, participates in the recruitment of DNA damage repair factors to DNA break sites. Required for proper progression through S phase and subsequent mitotic entry. Acts as a positive regulator of TP53 by deubiquitinating and stabilizing it to promote normal cell proliferation and transformation. Participates in establishing tolerance innate immune memory through non-transcriptional feedback. Mechanistically, negatively regulates TLR-induced NF-kappa-B signaling by targeting and removing the 'Lys-63'-linked polyubiquitin chains on MYD88. Negatively regulates the activation of type I interferon signaling by mediating 'Lys-63'-linked polyubiquitin chains on RIGI and IFIH1. Also deubiquinates ASC/PYCARD, the central adapter mediating the assembly and activation of most inflammasomes, and thereby promotes inflammasome activation. In Mus musculus (Mouse), this protein is Ubiquitin carboxyl-terminal hydrolase 3 (Usp3).